A 205-amino-acid polypeptide reads, in one-letter code: Small ribosomal subunit protein uS7 (205 aa).

This sequence belongs to the universal ribosomal protein uS7 family. As to quaternary structure, part of the 30S ribosomal subunit.

Functionally, one of the primary rRNA binding proteins, it binds directly to 16S rRNA where it nucleates assembly of the head domain of the 30S subunit. Is located at the subunit interface close to the decoding center. The sequence is that of Small ribosomal subunit protein uS7 from Aeropyrum pernix (strain ATCC 700893 / DSM 11879 / JCM 9820 / NBRC 100138 / K1).